The following is a 192-amino-acid chain: MISISDSAQAHFVKLLADQPAGTHIRVFVISPGTSQAECGVSYCPPDAVESDDVELEFNGFNAMVDAKSVAYLEDASIDFVTDQLGSQLTLKAPNAKMRKVSGDAPLVERIEYVIQSEINPQLASHGGNIMLVEVTDDGVAVLQFGGGCNGCSQVDITLKDGIEKQLLDLFTGELTGVRDVTDHQPGAHSYT.

2 residues coordinate [4Fe-4S] cluster: Cys-149 and Cys-152.

Belongs to the NfuA family. In terms of assembly, homodimer. The cofactor is [4Fe-4S] cluster.

Functionally, involved in iron-sulfur cluster biogenesis. Binds a 4Fe-4S cluster, can transfer this cluster to apoproteins, and thereby intervenes in the maturation of Fe/S proteins. Could also act as a scaffold/chaperone for damaged Fe/S proteins. This Shewanella denitrificans (strain OS217 / ATCC BAA-1090 / DSM 15013) protein is Fe/S biogenesis protein NfuA.